The chain runs to 322 residues: NADH-quinone oxidoreductase subunit H (322 aa).

A run of 8 helical transmembrane segments spans residues 12–32, 79–99, 111–131, 151–171, 183–203, 234–254, 262–282, and 301–321; these read VGKALIVLVGIVGAGAFMSFI, IFILAPIIAFTAFILAFAVVP, VGLLYILAIAGLAVYAVLFAG, LSYEVFLGLSLMGIVIQTGSF, LWNVVPQILGFITFLFAGVAV, FFVGEYIGIVLISSLIVTLFF, LPPFIWFALKTACFMVFFILL, and VCLPLTLVNMLITGAVVLINV.

It belongs to the complex I subunit 1 family. NDH-1 is composed of 14 different subunits. Subunits NuoA, H, J, K, L, M, N constitute the membrane sector of the complex.

The protein resides in the cell inner membrane. It carries out the reaction a quinone + NADH + 5 H(+)(in) = a quinol + NAD(+) + 4 H(+)(out). NDH-1 shuttles electrons from NADH, via FMN and iron-sulfur (Fe-S) centers, to quinones in the respiratory chain. The immediate electron acceptor for the enzyme in this species is believed to be ubiquinone. Couples the redox reaction to proton translocation (for every two electrons transferred, four hydrogen ions are translocated across the cytoplasmic membrane), and thus conserves the redox energy in a proton gradient. This subunit may bind ubiquinone. In Aeromonas salmonicida (strain A449), this protein is NADH-quinone oxidoreductase subunit H.